The primary structure comprises 303 residues: Acetylglutamate kinase (303 aa).

Residues 76–77, R98, and N192 contribute to the substrate site; that span reads GG.

It belongs to the acetylglutamate kinase family. ArgB subfamily.

The protein resides in the cytoplasm. The enzyme catalyses N-acetyl-L-glutamate + ATP = N-acetyl-L-glutamyl 5-phosphate + ADP. It functions in the pathway amino-acid biosynthesis; L-arginine biosynthesis; N(2)-acetyl-L-ornithine from L-glutamate: step 2/4. Functionally, catalyzes the ATP-dependent phosphorylation of N-acetyl-L-glutamate. This is Acetylglutamate kinase from Chlorobium phaeobacteroides (strain DSM 266 / SMG 266 / 2430).